We begin with the raw amino-acid sequence, 122 residues long: Large ribosomal subunit protein uL14 (122 aa).

Belongs to the universal ribosomal protein uL14 family. In terms of assembly, part of the 50S ribosomal subunit. Forms a cluster with proteins L3 and L19. In the 70S ribosome, L14 and L19 interact and together make contacts with the 16S rRNA in bridges B5 and B8.

Functionally, binds to 23S rRNA. Forms part of two intersubunit bridges in the 70S ribosome. The protein is Large ribosomal subunit protein uL14 of Caldanaerobacter subterraneus subsp. tengcongensis (strain DSM 15242 / JCM 11007 / NBRC 100824 / MB4) (Thermoanaerobacter tengcongensis).